The chain runs to 419 residues: Vacuolar aspartic protease (419 aa).

The signal sequence occupies residues 1–22; the sequence is MQLSLSALTTVALALTSSLVDA. The region spanning 104–415 is the Peptidase A1 domain; the sequence is YFTEIQIGTP…DLDKNAVGLA (312 aa). Residue aspartate 122 is part of the active site. Cysteine 135 and cysteine 140 are oxidised to a cystine. Asparagine 157 carries an N-linked (GlcNAc...) asparagine glycan. Aspartate 307 is a catalytic residue. A disulfide bridge connects residues cysteine 341 and cysteine 374. An N-linked (GlcNAc...) asparagine glycan is attached at asparagine 358. A Microbody targeting signal motif is present at residues 417–419; sequence TKV.

The protein belongs to the peptidase A1 family.

It is found in the vacuole. The polypeptide is Vacuolar aspartic protease (APR1) (Candida albicans (Yeast)).